The following is a 218-amino-acid chain: Thiopurine S-methyltransferase (218 aa).

S-adenosyl-L-methionine contacts are provided by tryptophan 10, leucine 45, glutamate 66, and arginine 123.

This sequence belongs to the class I-like SAM-binding methyltransferase superfamily. TPMT family.

It localises to the cytoplasm. The enzyme catalyses S-adenosyl-L-methionine + a thiopurine = S-adenosyl-L-homocysteine + a thiopurine S-methylether.. The protein is Thiopurine S-methyltransferase of Shewanella loihica (strain ATCC BAA-1088 / PV-4).